The sequence spans 497 residues: Cysteine--tRNA ligase (497 aa).

A Zn(2+)-binding site is contributed by cysteine 32. Positions 34–44 (PTVYGEGHLGH) match the 'HIGH' region motif. Zn(2+)-binding residues include cysteine 228, histidine 253, and glutamate 257. Positions 285-289 (KMGKS) match the 'KMSKS' region motif. Lysine 288 contributes to the ATP binding site.

It belongs to the class-I aminoacyl-tRNA synthetase family. In terms of assembly, monomer. The cofactor is Zn(2+).

The protein resides in the cytoplasm. The catalysed reaction is tRNA(Cys) + L-cysteine + ATP = L-cysteinyl-tRNA(Cys) + AMP + diphosphate. This is Cysteine--tRNA ligase from Cytophaga hutchinsonii (strain ATCC 33406 / DSM 1761 / CIP 103989 / NBRC 15051 / NCIMB 9469 / D465).